The chain runs to 184 residues: GTP cyclohydrolase 1 (184 aa).

Residues cysteine 75, histidine 78, and cysteine 146 each coordinate Zn(2+).

This sequence belongs to the GTP cyclohydrolase I family. As to quaternary structure, homomer.

It catalyses the reaction GTP + H2O = 7,8-dihydroneopterin 3'-triphosphate + formate + H(+). It functions in the pathway cofactor biosynthesis; 7,8-dihydroneopterin triphosphate biosynthesis; 7,8-dihydroneopterin triphosphate from GTP: step 1/1. The sequence is that of GTP cyclohydrolase 1 from Finegoldia magna (strain ATCC 29328 / DSM 20472 / WAL 2508) (Peptostreptococcus magnus).